The sequence spans 119 residues: Large ribosomal subunit protein uL18 (119 aa).

Belongs to the universal ribosomal protein uL18 family. In terms of assembly, part of the 50S ribosomal subunit; part of the 5S rRNA/L5/L18/L25 subcomplex. Contacts the 5S and 23S rRNAs.

Its function is as follows. This is one of the proteins that bind and probably mediate the attachment of the 5S RNA into the large ribosomal subunit, where it forms part of the central protuberance. The polypeptide is Large ribosomal subunit protein uL18 (Legionella pneumophila (strain Paris)).